Consider the following 349-residue polypeptide: CCN family member 2 (349 aa).

The signal sequence occupies residues 1-26; sequence MTAASMGPVRVAFVVLLALCSRPAVG. One can recognise an IGFBP N-terminal domain in the interval 27–98; it reads QNCSGPCRCP…NRKIGVCTAK (72 aa). N-linked (GlcNAc...) asparagine glycosylation occurs at asparagine 28. 6 disulfide bridges follow: cysteine 29-cysteine 54, cysteine 33-cysteine 56, cysteine 35-cysteine 57, cysteine 43-cysteine 60, cysteine 68-cysteine 82, and cysteine 74-cysteine 95. The region spanning 101–167 is the VWFC domain; sequence APCIFGGTVY…GKCCEEWVCD (67 aa). Positions 198–243 constitute a TSP type-1 domain; it reads NCLVQTTEWSACSKTCGMGISTRVTNDNASCRLEKQSRLCMVRPCE. The N-linked (GlcNAc...) asparagine glycan is linked to asparagine 225. Positions 247–349 are heparin-binding; sequence EENIKKGKKC…YYRKMYGDMA (103 aa). 5 disulfides stabilise this stretch: cysteine 256–cysteine 293, cysteine 273–cysteine 307, cysteine 284–cysteine 323, cysteine 287–cysteine 325, and cysteine 292–cysteine 329. The CTCK domain occupies 256–330; sequence CIRTPKISKP…KTCACHYNCP (75 aa).

The protein belongs to the CCN family. As to quaternary structure, monomer. Interacts with TSKU. Expressed in bone marrow and thymic cells. Also expressed one of two Wilms tumors tested.

Its subcellular location is the secreted. It is found in the extracellular space. The protein resides in the extracellular matrix. Its function is as follows. Major connective tissue mitoattractant secreted by vascular endothelial cells. Promotes proliferation and differentiation of chondrocytes. Is involved in the stimulation of osteoblast differentiation and has a critical role in osteogenesis. Mediates heparin- and divalent cation-dependent cell adhesion in many cell types including fibroblasts, myofibroblasts, endothelial and epithelial cells. Enhances fibroblast growth factor-induced DNA synthesis. The chain is CCN family member 2 from Homo sapiens (Human).